We begin with the raw amino-acid sequence, 468 residues long: Probable Xaa-Pro aminopeptidase PEPP (468 aa).

Mn(2+) is bound by residues Asp-264, Asp-275, Glu-398, and Glu-438.

It belongs to the peptidase M24B family. It depends on Mn(2+) as a cofactor.

The enzyme catalyses Release of any N-terminal amino acid, including proline, that is linked to proline, even from a dipeptide or tripeptide.. Its function is as follows. Catalyzes the removal of a penultimate prolyl residue from the N-termini of peptides. In Paracoccidioides brasiliensis (strain Pb03), this protein is Probable Xaa-Pro aminopeptidase PEPP (PEPP).